A 585-amino-acid chain; its full sequence is MNVFKNFEQKIKKSLKESDIKGKNGENLDLSKITVDPPRDSLHGDLSTNASMVLAKSVGLNPRTLAEKIIALLKDDPSIDHLEVAGSGFINIKLTKSFWHDVLKLMITSGTDYGRTQIGQGKQVNVEYVSANPTGPMHVGHCRGAVVGDVLANLLQFAGYNVTKEYYINDAGKQIEILAASVLLRYREALGETINKIPEGLYPGEYLIPLGQSLVQEFGDKLLTMDNEKALSIVKERSIDAMMTMIRQDLATLNIHHDVFFSERMLYMNNAQAIRNTINDLTLNGYVYKGKLSPPKGQTLEDWEPHEQTLFRSTDVGDDQDRVLIKSDGSYTYFAADVAYFRDKFHRHFDEMIYVLGADHAGYVKRLEAVAKAISGNKAKLTAFLCQLVKLFRNGHPVRMSKREGSFITLRDVVKEVGRDPVRFMMLYRKCEAPLDFDLEKVTEQSKDNPIFYVQYAHARCHSVFRQAQENLQIENPSNDLMIAHLDQLTNDSEISLIHKLAQYPRIIEQAIVYKEPHRLAFYLYDLASNFHGHWNKGNDNPELRFIKPNNKKLSLARLGLVQAFINVLSSGLKIVEVKAPTEMR.

A 'HIGH' region motif is present at residues 131–141 (ANPTGPMHVGH).

The protein belongs to the class-I aminoacyl-tRNA synthetase family. In terms of assembly, monomer.

It is found in the cytoplasm. The enzyme catalyses tRNA(Arg) + L-arginine + ATP = L-arginyl-tRNA(Arg) + AMP + diphosphate. This chain is Arginine--tRNA ligase, found in Bartonella bacilliformis (strain ATCC 35685 / KC583 / Herrer 020/F12,63).